Reading from the N-terminus, the 980-residue chain is Putative formate dehydrogenase YrhE (980 aa).

The 77-residue stretch at 5 to 81 (KSISVRVDGT…GMSIDLSGNR (77 aa)) folds into the 2Fe-2S ferredoxin-type domain. [2Fe-2S] cluster contacts are provided by Cys-39, Cys-50, Cys-53, and Cys-65. A 4Fe-4S His(Cys)3-ligated-type domain is found at 81–121 (RVKEAQTEAMDRLLENHLLYCTVCDNNNGNCTLHNTAEMMG). Residues His-97, Cys-101, Cys-104, Cys-111, Cys-153, Cys-156, Cys-159, Cys-163, Cys-196, Cys-199, Cys-202, Cys-206, Cys-270, Cys-273, Cys-277, and Cys-305 each contribute to the [4Fe-4S] cluster site. 2 4Fe-4S ferredoxin-type domains span residues 144–171 (PFYR…VNET) and 187–216 (EGVP…EKSM). A formate dehydrogenase region spans residues 258–980 (MRETRTKKTK…NRPGYVHLTD (723 aa)). Residues 263-319 (TKKTKTVCTFCGVGCSFEVWTKGRDILKIQPVSDAPVNAISTCVKGKFGWDFVNSKE) form the 4Fe-4S Mo/W bis-MGD-type domain. Residues 944–980 (ETAPLPKTNPRNKKRHPQNGVEAERKWNRPGYVHLTD) are disordered.

It in the C-terminal section; belongs to the prokaryotic molybdopterin-containing oxidoreductase family. [2Fe-2S] cluster is required as a cofactor. Requires [4Fe-4S] cluster as cofactor. Mo-bis(molybdopterin guanine dinucleotide) serves as cofactor.

The catalysed reaction is formate + NAD(+) = CO2 + NADH. This Bacillus subtilis (strain 168) protein is Putative formate dehydrogenase YrhE (yrhE).